The sequence spans 336 residues: tRNA N6-adenosine threonylcarbamoyltransferase (336 aa).

Fe cation-binding residues include histidine 110 and histidine 114. Residues 133–137, aspartate 166, glycine 179, and asparagine 271 each bind substrate; that span reads LVSGK. Aspartate 300 provides a ligand contact to Fe cation.

This sequence belongs to the KAE1 / TsaD family. Requires Fe(2+) as cofactor.

Its subcellular location is the cytoplasm. It catalyses the reaction L-threonylcarbamoyladenylate + adenosine(37) in tRNA = N(6)-L-threonylcarbamoyladenosine(37) in tRNA + AMP + H(+). Functionally, required for the formation of a threonylcarbamoyl group on adenosine at position 37 (t(6)A37) in tRNAs that read codons beginning with adenine. Is involved in the transfer of the threonylcarbamoyl moiety of threonylcarbamoyl-AMP (TC-AMP) to the N6 group of A37, together with TsaE and TsaB. TsaD likely plays a direct catalytic role in this reaction. This Buchnera aphidicola subsp. Acyrthosiphon pisum (strain 5A) protein is tRNA N6-adenosine threonylcarbamoyltransferase.